A 499-amino-acid chain; its full sequence is Type-1 glutamine synthetase 1 (499 aa).

The 97-residue stretch at 50-146 (PQLKFIRVCW…IFGEFFYLDN (97 aa)) folds into the GS beta-grasp domain. Residues 158-499 (PRNSLQRAID…DQILKLLELF (342 aa)) form the GS catalytic domain.

Belongs to the glutamine synthetase family.

The enzyme catalyses L-glutamate + NH4(+) + ATP = L-glutamine + ADP + phosphate + H(+). This Dictyostelium discoideum (Social amoeba) protein is Type-1 glutamine synthetase 1 (glnA1).